The chain runs to 97 residues: uncharacterized protein (97 aa).

3 consecutive transmembrane segments (helical) span residues 7–27, 34–54, and 69–89; these read CIAPLIYLVFGVSSTWLIGLG, IPMLIISLCAFAYGFWLLMFS, and IVLYWIVFIVMIFFLTYPTIL.

The protein resides in the cell membrane. This is an uncharacterized protein from Haemophilus influenzae (strain ATCC 51907 / DSM 11121 / KW20 / Rd).